The primary structure comprises 203 residues: Imidazoleglycerol-phosphate dehydratase (203 aa).

Belongs to the imidazoleglycerol-phosphate dehydratase family.

Its subcellular location is the cytoplasm. The catalysed reaction is D-erythro-1-(imidazol-4-yl)glycerol 3-phosphate = 3-(imidazol-4-yl)-2-oxopropyl phosphate + H2O. The protein operates within amino-acid biosynthesis; L-histidine biosynthesis; L-histidine from 5-phospho-alpha-D-ribose 1-diphosphate: step 6/9. The protein is Imidazoleglycerol-phosphate dehydratase of Parvibaculum lavamentivorans (strain DS-1 / DSM 13023 / NCIMB 13966).